A 1262-amino-acid polypeptide reads, in one-letter code: Cytoplasmic FMR1-interacting protein homolog (1262 aa).

Positions 519-550 (LNRMTDVKGKKKSSAPKGDSANSSSSDIRIPR) are disordered.

Belongs to the CYFIP family. Interacts with gex-3.

The protein localises to the cytoplasm. Functionally, required for initial steps of body morphogenesis. May play a role in egg laying and yolk protein clatherin-mediated endocytosis by oocytes during oogenesis. Plays a role in the formation of muscle connections, also called muscle arm extensions, between the body wall and the motor axons in the dorsal and ventral cord. The sequence is that of Cytoplasmic FMR1-interacting protein homolog from Caenorhabditis elegans.